Here is a 142-residue protein sequence, read N- to C-terminus: Large ribosomal subunit protein uL13 (142 aa).

It belongs to the universal ribosomal protein uL13 family. Part of the 50S ribosomal subunit.

In terms of biological role, this protein is one of the early assembly proteins of the 50S ribosomal subunit, although it is not seen to bind rRNA by itself. It is important during the early stages of 50S assembly. This chain is Large ribosomal subunit protein uL13, found in Klebsiella pneumoniae (strain 342).